A 412-amino-acid polypeptide reads, in one-letter code: Argininosuccinate synthase (412 aa).

Residues 15–23 (AYSGGLDTS) and Ala-42 each bind ATP. Residues Tyr-93 and Ser-98 each contribute to the L-citrulline site. ATP is bound at residue Gly-123. Thr-125, Asn-129, and Asp-130 together coordinate L-aspartate. Asn-129 contributes to the L-citrulline binding site. The L-citrulline site is built by Arg-133, Ser-185, Ser-194, Glu-270, and Tyr-282.

The protein belongs to the argininosuccinate synthase family. Type 1 subfamily. Homotetramer.

It localises to the cytoplasm. It catalyses the reaction L-citrulline + L-aspartate + ATP = 2-(N(omega)-L-arginino)succinate + AMP + diphosphate + H(+). Its pathway is amino-acid biosynthesis; L-arginine biosynthesis; L-arginine from L-ornithine and carbamoyl phosphate: step 2/3. The chain is Argininosuccinate synthase from Psychrobacter arcticus (strain DSM 17307 / VKM B-2377 / 273-4).